Here is a 352-residue protein sequence, read N- to C-terminus: Uroporphyrinogen decarboxylase (352 aa).

Residues 27–31 (RQAGR), D77, Y154, T209, and H325 each bind substrate.

Belongs to the uroporphyrinogen decarboxylase family. As to quaternary structure, homodimer.

It localises to the cytoplasm. It carries out the reaction uroporphyrinogen III + 4 H(+) = coproporphyrinogen III + 4 CO2. Its pathway is porphyrin-containing compound metabolism; protoporphyrin-IX biosynthesis; coproporphyrinogen-III from 5-aminolevulinate: step 4/4. Catalyzes the decarboxylation of four acetate groups of uroporphyrinogen-III to yield coproporphyrinogen-III. In Legionella pneumophila (strain Lens), this protein is Uroporphyrinogen decarboxylase.